The primary structure comprises 511 residues: Bifunctional purine biosynthesis protein PurH (511 aa).

In terms of domain architecture, MGS-like spans 1–145 (MKKRALVSVS…KNHKFVSVIV (145 aa)).

It belongs to the PurH family.

The catalysed reaction is (6R)-10-formyltetrahydrofolate + 5-amino-1-(5-phospho-beta-D-ribosyl)imidazole-4-carboxamide = 5-formamido-1-(5-phospho-D-ribosyl)imidazole-4-carboxamide + (6S)-5,6,7,8-tetrahydrofolate. It carries out the reaction IMP + H2O = 5-formamido-1-(5-phospho-D-ribosyl)imidazole-4-carboxamide. The protein operates within purine metabolism; IMP biosynthesis via de novo pathway; 5-formamido-1-(5-phospho-D-ribosyl)imidazole-4-carboxamide from 5-amino-1-(5-phospho-D-ribosyl)imidazole-4-carboxamide (10-formyl THF route): step 1/1. It functions in the pathway purine metabolism; IMP biosynthesis via de novo pathway; IMP from 5-formamido-1-(5-phospho-D-ribosyl)imidazole-4-carboxamide: step 1/1. This Bacillus cereus (strain ATCC 14579 / DSM 31 / CCUG 7414 / JCM 2152 / NBRC 15305 / NCIMB 9373 / NCTC 2599 / NRRL B-3711) protein is Bifunctional purine biosynthesis protein PurH.